A 125-amino-acid chain; its full sequence is Large ribosomal subunit protein bL12 (125 aa).

This sequence belongs to the bacterial ribosomal protein bL12 family. As to quaternary structure, homodimer. Part of the ribosomal stalk of the 50S ribosomal subunit. Forms a multimeric L10(L12)X complex, where L10 forms an elongated spine to which 2 to 4 L12 dimers bind in a sequential fashion. Binds GTP-bound translation factors.

In terms of biological role, forms part of the ribosomal stalk which helps the ribosome interact with GTP-bound translation factors. Is thus essential for accurate translation. In Polaromonas naphthalenivorans (strain CJ2), this protein is Large ribosomal subunit protein bL12.